A 517-amino-acid chain; its full sequence is ATP synthase subunit alpha 2 (517 aa).

173-180 (GDRQTGKT) lines the ATP pocket.

This sequence belongs to the ATPase alpha/beta chains family. As to quaternary structure, F-type ATPases have 2 components, CF(1) - the catalytic core - and CF(0) - the membrane proton channel. CF(1) has five subunits: alpha(3), beta(3), gamma(1), delta(1), epsilon(1). CF(0) has three main subunits: a(1), b(2) and c(9-12). The alpha and beta chains form an alternating ring which encloses part of the gamma chain. CF(1) is attached to CF(0) by a central stalk formed by the gamma and epsilon chains, while a peripheral stalk is formed by the delta and b chains.

The protein resides in the cell inner membrane. It catalyses the reaction ATP + H2O + 4 H(+)(in) = ADP + phosphate + 5 H(+)(out). In terms of biological role, produces ATP from ADP in the presence of a proton gradient across the membrane. The alpha chain is a regulatory subunit. The sequence is that of ATP synthase subunit alpha 2 from Legionella pneumophila (strain Corby).